We begin with the raw amino-acid sequence, 231 residues long: Large ribosomal subunit protein uL1 (231 aa).

The protein belongs to the universal ribosomal protein uL1 family. Part of the 50S ribosomal subunit.

Binds directly to 23S rRNA. The L1 stalk is quite mobile in the ribosome, and is involved in E site tRNA release. Functionally, protein L1 is also a translational repressor protein, it controls the translation of the L11 operon by binding to its mRNA. The protein is Large ribosomal subunit protein uL1 of Polaromonas sp. (strain JS666 / ATCC BAA-500).